The chain runs to 195 residues: Glutathione S-transferase class-mu 26 kDa isozyme (195 aa).

Positions 1–83 constitute a GST N-terminal domain; that stretch reads MAPKLGYWKI…YIADKHNMLG (83 aa). Residues 7–8, 41–45, 54–55, and 67–68 contribute to the glutathione site; these read YW, WRNEK, NL, and QS. The region spanning 85 to 195 is the GST C-terminal domain; it reads CPKERAEISM…TFGGGDAPPK (111 aa). Y111 provides a ligand contact to substrate.

This sequence belongs to the GST superfamily. Mu family. Homodimer.

It carries out the reaction RX + glutathione = an S-substituted glutathione + a halide anion + H(+). In terms of biological role, conjugation of reduced glutathione to a wide number of exogenous and endogenous hydrophobic electrophiles. Functionally, GST isoenzymes appear to play a central role in the parasite detoxification system. Other functions are also suspected including a role in increasing the solubility of haematin in the parasite gut. The polypeptide is Glutathione S-transferase class-mu 26 kDa isozyme (Schistosoma mansoni (Blood fluke)).